We begin with the raw amino-acid sequence, 322 residues long: Protein-methionine-sulfoxide reductase catalytic subunit MsrP (322 aa).

A signal peptide (tat-type signal) is located at residues 1–59; sequence MSLRDALKTPSSEITDEAVYRDRRRLLQLFALTPALSVAGCAEADPPPPPKTVVTPAQA. Residues Asn79, 82–83, Cys137, Thr172, Asn220, Arg225, and 236–238 contribute to the Mo-molybdopterin site; these read YE and SIK.

It belongs to the MsrP family. In terms of assembly, heterodimer of a catalytic subunit (MsrP) and a heme-binding subunit (MsrQ). Mo-molybdopterin serves as cofactor. Predicted to be exported by the Tat system. The position of the signal peptide cleavage has not been experimentally proven.

It is found in the periplasm. The catalysed reaction is L-methionyl-[protein] + a quinone + H2O = L-methionyl-(S)-S-oxide-[protein] + a quinol. It carries out the reaction L-methionyl-[protein] + a quinone + H2O = L-methionyl-(R)-S-oxide-[protein] + a quinol. Its function is as follows. Part of the MsrPQ system that repairs oxidized periplasmic proteins containing methionine sulfoxide residues (Met-O), using respiratory chain electrons. Thus protects these proteins from oxidative-stress damage caused by reactive species of oxygen and chlorine generated by the host defense mechanisms. MsrPQ is essential for the maintenance of envelope integrity under bleach stress, rescuing a wide series of structurally unrelated periplasmic proteins from methionine oxidation. The catalytic subunit MsrP is non-stereospecific, being able to reduce both (R-) and (S-) diastereoisomers of methionine sulfoxide. This is Protein-methionine-sulfoxide reductase catalytic subunit MsrP from Xanthomonas campestris pv. campestris (strain ATCC 33913 / DSM 3586 / NCPPB 528 / LMG 568 / P 25).